A 707-amino-acid polypeptide reads, in one-letter code: F-box/WD repeat-containing protein 7 (707 aa).

The disordered stretch occupies residues 1-151 (MNQELLSVGS…SVTNSSSIVD (151 aa)). Serine 26 bears the Phosphoserine; by ATM mark. Residues 57–68 (GEVVGVEPRPGG) are compositionally biased toward low complexity. Positions 69–84 (QNDSQQGQLEENNNRF) are enriched in polar residues. Residues 87–129 (VDEDSSGNQEEQEEDEEHAGEQDEEDEEEEEMDQESDDFDQSD) are compositionally biased toward acidic residues. Residues 130–139 (DSSREDEHTH) show a composition bias toward basic and acidic residues. Residue threonine 205 is modified to Phosphothreonine. Serine 227 is modified (phosphoserine; by SGK1). Residues 278–324 (RDFISLLPKELALYVLSFLEPKDLLQAAQTCRYWRILAEDNLLWREK) enclose the F-box domain. WD repeat units follow at residues 378 to 418 (GHDD…RTLV), 420 to 456 (HTGGVWSSQMRDNIIISGSTDRTLKVWNAETGECIHT), 459 to 498 (GHTSTVRCMHLHEKRVVSGSRDATLRVWDIETGQCLHVLM), 500 to 536 (HVAAVRCVQYDGRRVVSGAYDFMVKVWDPETETCLHT), 539 to 578 (GHTNRVYSLQFDGIHVVSGSLDTSIRVWDVETGNCIHTLT), 580 to 618 (HQSLTSGMELKDNILVSGNADSTVKIWDIKTGQCLQTLQ), and 622 to 659 (KHQSAVTCLQFNKNFVITSSDDGTVKLWDLKTGEFIRN).

As to quaternary structure, homodimer; homodimerization plays a role in substrate binding and/or ubiquitination and degradation. Component of the SCF(FBXW7) complex consisting of CUL1, RBX1, SKP1 and FBXW7. Interacts (via F-box domain) with SKP1. Interacts (via F-box domain) with pseudophosphatase STYX; the interaction is direct and prevents FBXW7 interaction with SKP1. Interacts with cyclin-E (CCNE1 or CCNE2). Interacts with PSEN1. Forms a trimeric complex with NOTCH1 and SGK1. Interacts with NOTCH1 intracellular domain/NICD and NOTCH4 intracellular domain/NICD. Interacts with NOTCH2 intracellular domain (N2ICD). Interacts with MYC (when phosphorylated). Interacts with USP28, counteracting ubiquitination of MYC. Interacts with JUN. Found in a complex with JUN and PRR7. Interacts with JUN and PRR7; the interaction inhibits ubiquitination-mediated JUN degradation, promoting its phosphorylation and transcriptional activity. Interacts (when phosphorylated at Thr-205) with PIN1, disrupting FBXW7 dimerization and promoting FBXW7 autoubiquitination and degradation. Interacts with UBE2QL1. Interacts with FAM83D; promotes FBXW7 degradation. Interacts with MYCN; FBXW7 competes with AURKA for binding to unphosphorylated MYCN but not for binding to phosphorylated MYCN. Interacts with STOML1. Interacts with NFE2L1. Interacts with USP36, counteracting ubiquitination of MYC. Interacts with NR1D1. Interacts with RICTOR; mediates RICTOR ubiquitination and degradation. Interacts with USP38, counteracting ubiquitination of MYC. (Microbial infection) Interacts (via WD repeats) with SV40 large T antigen (via CPD region). Phosphorylation at Thr-205 promotes interaction with PIN1, leading to disrupt FBXW7 dimerization and promoting FBXW7 autoubiquitination and degradation. Phosphorylated by ATM at Ser-26 in response to DNA damage, promoting recruitment to DNA damage sites and 'Lys-63'-linked ubiquitination of phosphorylated XRCC4. In terms of processing, ubiquitinated: autoubiquitinates following phosphorylation at Thr-205 and subsequent interaction with PIN1. Ubiquitination leads to its proteasomal degradation. Widely expressed. In terms of tissue distribution, expressed in brain.

Its subcellular location is the nucleus. The protein resides in the nucleoplasm. The protein localises to the chromosome. It is found in the cytoplasm. It localises to the nucleolus. It participates in protein modification; protein ubiquitination. Its function is as follows. Substrate recognition component of a SCF (SKP1-CUL1-F-box protein) E3 ubiquitin-protein ligase complex which mediates the ubiquitination and subsequent proteasomal degradation of target proteins. Recognizes and binds phosphorylated sites/phosphodegrons within target proteins and thereafter brings them to the SCF complex for ubiquitination. Identified substrates include cyclin-E (CCNE1 or CCNE2), DISC1, JUN, MYC, NOTCH1 released notch intracellular domain (NICD), NFE2L1, NOTCH2, MCL1, MLST8, RICTOR, and probably PSEN1. Acts as a negative regulator of JNK signaling by binding to phosphorylated JUN and promoting its ubiquitination and subsequent degradation. Involved in bone homeostasis and negative regulation of osteoclast differentiation. Regulates the amplitude of the cyclic expression of hepatic core clock genes and genes involved in lipid and glucose metabolism via ubiquitination and proteasomal degradation of their transcriptional repressor NR1D1; CDK1-dependent phosphorylation of NR1D1 is necessary for SCF(FBXW7)-mediated ubiquitination. Also able to promote 'Lys-63'-linked ubiquitination in response to DNA damage. The SCF(FBXW7) complex facilitates double-strand break repair following phosphorylation by ATM: phosphorylation promotes localization to sites of double-strand breaks and 'Lys-63'-linked ubiquitination of phosphorylated XRCC4, enhancing DNA non-homologous end joining. This chain is F-box/WD repeat-containing protein 7, found in Homo sapiens (Human).